Consider the following 231-residue polypeptide: UPF0173 metal-dependent hydrolase AF_1265 (231 aa).

The protein belongs to the UPF0173 family.

This Archaeoglobus fulgidus (strain ATCC 49558 / DSM 4304 / JCM 9628 / NBRC 100126 / VC-16) protein is UPF0173 metal-dependent hydrolase AF_1265.